A 355-amino-acid polypeptide reads, in one-letter code: C-C chemokine receptor type 3 (355 aa).

At 1-34 the chain is on the extracellular side; it reads MTTSLDTVETFGPTSYDDDMGLLCEKADVGALIA. A helical membrane pass occupies residues 35 to 62; that stretch reads QFVPPLYSLVFMVGLLGNVVVVMILIKY. Residues 63–72 lie on the Cytoplasmic side of the membrane; sequence RRLRIMTNIY. The chain crosses the membrane as a helical span at residues 73 to 93; sequence LLNLAISDLLFLFTLPFWIHY. Residues 94 to 107 lie on the Extracellular side of the membrane; sequence VRERNWVFSHGMCK. Cys106 and Cys183 are oxidised to a cystine. The chain crosses the membrane as a helical span at residues 108–129; it reads VLSGFYHTGLYSEIFFIILLTI. Residues 130-146 are Cytoplasmic-facing; it reads DRYLAIVHAVFALRART. A helical membrane pass occupies residues 147 to 171; the sequence is VTFGVITSIVTWGLAVLAALPEFIF. Residues 172-203 lie on the Extracellular side of the membrane; the sequence is YGTEKLFPKTLCSAIYPQDTVYSWRHFHTLKM. The helical transmembrane segment at 204 to 223 threads the bilayer; it reads TILCLALPLLVMAICYTGII. The Cytoplasmic portion of the chain corresponds to 224–239; the sequence is KTLLRCPSKKKYKAIR. The helical transmembrane segment at 240–264 threads the bilayer; that stretch reads LIFVIMAVFFIFWTPYNVAILISTY. The Extracellular segment spans residues 265 to 281; sequence QSVLFGLDCERSKHLDL. The helical transmembrane segment at 282–305 threads the bilayer; the sequence is FVLATEVIAYSHCCVNPVIYAFVG. Residues 306–355 are Cytoplasmic-facing; that stretch reads ERFRKYLRHFFHRHVLMHLGKYIPFLPSEKLERTSSVSPSTAEPELSIVF.

This sequence belongs to the G-protein coupled receptor 1 family.

The protein localises to the cell membrane. In terms of biological role, receptor for C-C type chemokine. Binds and responds to a variety of chemokines, including CCL11, CCL26, CCL7, CCL13, RANTES(CCL5) and CCL15. Subsequently transduces a signal by increasing the intracellular calcium ions level. In addition acts as a possible functional receptor for NARS1. The chain is C-C chemokine receptor type 3 (CCR3) from Macaca mulatta (Rhesus macaque).